Here is a 452-residue protein sequence, read N- to C-terminus: Glucose-6-phosphate isomerase (452 aa).

E290 functions as the Proton donor in the catalytic mechanism. Residues H311 and K425 contribute to the active site.

This sequence belongs to the GPI family.

The protein localises to the cytoplasm. It catalyses the reaction alpha-D-glucose 6-phosphate = beta-D-fructose 6-phosphate. Its pathway is carbohydrate biosynthesis; gluconeogenesis. The protein operates within carbohydrate degradation; glycolysis; D-glyceraldehyde 3-phosphate and glycerone phosphate from D-glucose: step 2/4. Catalyzes the reversible isomerization of glucose-6-phosphate to fructose-6-phosphate. The chain is Glucose-6-phosphate isomerase from Limosilactobacillus reuteri (strain DSM 20016) (Lactobacillus reuteri).